The sequence spans 409 residues: uncharacterized protein (409 aa).

A signal peptide spans 1–39 (MVSDSKLELPLPVNQQKPRRRRILKVHLLIAALILSAVG). Histidine 67, aspartate 69, glutamate 181, histidine 250, and histidine 271 together coordinate Zn(2+).

The protein belongs to the metallo-dependent hydrolases superfamily. Peptidase M19 family. As to quaternary structure, interacts with dil1. Requires Zn(2+) as cofactor.

It carries out the reaction an L-aminoacyl-L-amino acid + H2O = 2 an L-alpha-amino acid. This is an uncharacterized protein from Schizosaccharomyces pombe (strain 972 / ATCC 24843) (Fission yeast).